The following is a 272-amino-acid chain: HMP-PP phosphatase (272 aa).

Asp8 serves as the catalytic Nucleophile. Mg(2+) contacts are provided by Asp8, Asp10, and Asp212.

Belongs to the HAD-like hydrolase superfamily. Cof family. The cofactor is Mg(2+).

It carries out the reaction 4-amino-2-methyl-5-(diphosphooxymethyl)pyrimidine + H2O = 4-amino-2-methyl-5-(phosphooxymethyl)pyrimidine + phosphate + H(+). Functionally, catalyzes the hydrolysis of 4-amino-2-methyl-5-hydroxymethylpyrimidine pyrophosphate (HMP-PP) to 4-amino-2-methyl-5-hydroxymethylpyrimidine phosphate (HMP-P). The chain is HMP-PP phosphatase from Enterobacter sp. (strain 638).